The chain runs to 450 residues: Trigger factor (450 aa).

Residues 161–246 (GDRVVIDFKG…VKTVEAPEYP (86 aa)) form the PPIase FKBP-type domain. The interval 422 to 450 (PMSLQELMSPQQPEAESAEGESKQDETKE) is disordered. The span at 441 to 450 (GESKQDETKE) shows a compositional bias: basic and acidic residues.

It belongs to the FKBP-type PPIase family. Tig subfamily.

The protein localises to the cytoplasm. It carries out the reaction [protein]-peptidylproline (omega=180) = [protein]-peptidylproline (omega=0). Its function is as follows. Involved in protein export. Acts as a chaperone by maintaining the newly synthesized protein in an open conformation. Functions as a peptidyl-prolyl cis-trans isomerase. The protein is Trigger factor of Alkalilimnicola ehrlichii (strain ATCC BAA-1101 / DSM 17681 / MLHE-1).